We begin with the raw amino-acid sequence, 154 residues long: MQGHPEVIDYLNTLLTGELAARDQYFIHSRMYEDWGFSKLYERLNHEMEEETQHADALLRRILLLEGTPRMRPDDIHPGTTVPEMLEADLKLERHVRAALAKGIALCEQHKDFVSRDILKAQLADTEEDHAYWLEQQLGLIARMGLENYLQSQI.

A Ferritin-like diiron domain is found at 1–145; the sequence is MQGHPEVIDY…QQLGLIARMG (145 aa). Positions 18, 46, 47, 50, 51, 54, 93, 129, and 130 each coordinate Fe(3+).

Belongs to the bacterioferritin family. As to quaternary structure, the bacterioferritin (BFR) complex is formed of 24 subunits (FtnA and BfrB) arranged as 12 homodimers. The holocomplex contains about 8.7% Fe and 8.0% phosphate. In vivo purifies with BfrB in varying ratios, depending on the O(2) content; as O(2) decreases FtnA content rises. Pure FtnA BFR complexes are not isolated in situ, although in a bfrB deletion some iron will accumulate in FtnA ferritin complexes. Upon crystallization forms homooligomers of 24 subunits, the BFR complex, arranged as 12 dimers, that are packed together to form an approximately spherical molecule with a central cavity, in which large amounts of iron can be deposited. The BFR shell has three- and four-fold pores; Fe(2+) may move in and out of the shell via the four-fold pores. Does not interact with Bfd.

The protein resides in the cytoplasm. It carries out the reaction 4 Fe(2+) + O2 + 4 H(+) = 4 Fe(3+) + 2 H2O. It catalyses the reaction Fe(2+)(in) = Fe(2+)(out). Its function is as follows. Plays a role in catalase A (katA) expression; activity is required for optimal KatA activity and resistance to H(2)O(2). Iron-storage protein that is part of the heterooligomeric bacterioferritin (BFR) complex. The ferroxidase center binds Fe(2+), oxidizes it using dioxygen to Fe(3+), and participates in subsequent Fe(3+) oxide mineral core formation within the central cavity of the BFR protein shell. Can store up to 520 iron atoms per ferritin protein molecule. Iron release requires only the input of electrons from ferredoxin NADP reductase (FPR), does not require Bfd. Does not bind heme. The protein is Bacterial ferritin of Pseudomonas aeruginosa (strain ATCC 15692 / DSM 22644 / CIP 104116 / JCM 14847 / LMG 12228 / 1C / PRS 101 / PAO1).